Reading from the N-terminus, the 238-residue chain is Probable transcriptional regulatory protein Mmwyl1_2868 (238 aa).

Belongs to the TACO1 family.

The protein resides in the cytoplasm. The sequence is that of Probable transcriptional regulatory protein Mmwyl1_2868 from Marinomonas sp. (strain MWYL1).